We begin with the raw amino-acid sequence, 693 residues long: Elongation factor G (693 aa).

Residues 8 to 284 (DMTRNVGIMA…AIVNYMPAPT (277 aa)) form the tr-type G domain. Residues 17–24 (AHIDAGKT), 81–85 (DTPGH), and 135–138 (NKMD) contribute to the GTP site.

This sequence belongs to the TRAFAC class translation factor GTPase superfamily. Classic translation factor GTPase family. EF-G/EF-2 subfamily.

It localises to the cytoplasm. Catalyzes the GTP-dependent ribosomal translocation step during translation elongation. During this step, the ribosome changes from the pre-translocational (PRE) to the post-translocational (POST) state as the newly formed A-site-bound peptidyl-tRNA and P-site-bound deacylated tRNA move to the P and E sites, respectively. Catalyzes the coordinated movement of the two tRNA molecules, the mRNA and conformational changes in the ribosome. The polypeptide is Elongation factor G (Fusobacterium nucleatum subsp. nucleatum (strain ATCC 25586 / DSM 15643 / BCRC 10681 / CIP 101130 / JCM 8532 / KCTC 2640 / LMG 13131 / VPI 4355)).